Consider the following 235-residue polypeptide: MKLSLLTVAAAAGAAVAAPAAEIDTRAGSVQGFDISGYQPNVDFRAAYNGGARFVMIKATEGTTFKSSTFNSQYTGATNNKFIRGGYHFAHPDTSATAQCDYFLANGGGWSNDGITLPGMIDLEGTSGKPKCYGLSASAMIAWIKAFSDRYNAKTGRYPMIYTSPDWWQSCTGNTKTFGTTIPLVLARWASSPGTPPGGWPYHTFWQNADTYRFGGDSEIFNGGMDQLQRFAKGG.

An N-terminal signal peptide occupies residues 1–17; sequence MKLSLLTVAAAAGAAVA. Positions 29-235 constitute a Ch-type lysozyme domain; sequence SVQGFDISGY…DQLQRFAKGG (207 aa). Residues D34, D122, and E124 contribute to the active site. C132 and C171 are oxidised to a cystine.

This sequence belongs to the glycosyl hydrolase 25 family.

It localises to the secreted. It catalyses the reaction Hydrolysis of (1-&gt;4)-beta-linkages between N-acetylmuramic acid and N-acetyl-D-glucosamine residues in a peptidoglycan and between N-acetyl-D-glucosamine residues in chitodextrins.. In terms of biological role, this enzyme has both lysozyme (acetylmuramidase) and diacetylmuramidase activities. The polypeptide is N,O-diacetylmuramidase (Arthroderma benhamiae (strain ATCC MYA-4681 / CBS 112371) (Trichophyton mentagrophytes)).